Consider the following 750-residue polypeptide: ABC transporter D family member 3 (750 aa).

Residues 1–14 (MKKNNVNNITETLN) show a composition bias toward polar residues. The disordered stretch occupies residues 1–32 (MKKNNVNNITETLNSSSSSSSSSGSSSDEEVK). The span at 15-26 (SSSSSSSSSGSS) shows a compositional bias: low complexity. The next 4 membrane-spanning stretches (helical) occupy residues 63-83 (IVII…LLFG), 123-143 (FAIG…SIMA), 188-208 (FTTL…VVVY), and 215-235 (TTID…GYFI). Residues 74–362 (PLLLFLLLFG…EQAKQQFEAL (289 aa)) form the ABC transmembrane type-1 domain. The stretch at 334-370 (ALLKRSNKNIKNEELLVEEEQAKQQFEALLKNKKRVI) forms a coiled coil. The chain crosses the membrane as a helical span at residues 382-402 (MFTFFSPLINYFIISIPVFFL). Residues 507–737 (ITLDDVTYFT…SNNINTINID (231 aa)) form the ABC transporter domain. 540-547 (GPSGSGKS) lines the ATP pocket.

The protein belongs to the ABC transporter superfamily. ABCD family. Peroxisomal fatty acyl CoA transporter (TC 3.A.1.203) subfamily.

It localises to the membrane. The chain is ABC transporter D family member 3 (abcD3) from Dictyostelium discoideum (Social amoeba).